Reading from the N-terminus, the 282-residue chain is Pantothenate synthetase (282 aa).

Position 30-37 (30-37) interacts with ATP; that stretch reads MGNLHDGH. Histidine 37 functions as the Proton donor in the catalytic mechanism. Position 61 (glutamine 61) interacts with (R)-pantoate. Glutamine 61 contacts beta-alanine. 149-152 contributes to the ATP binding site; the sequence is GNKD. Glutamine 155 lines the (R)-pantoate pocket. Residues alanine 178 and 186–189 contribute to the ATP site; that span reads MSSR.

The protein belongs to the pantothenate synthetase family. Homodimer.

The protein localises to the cytoplasm. It catalyses the reaction (R)-pantoate + beta-alanine + ATP = (R)-pantothenate + AMP + diphosphate + H(+). It functions in the pathway cofactor biosynthesis; (R)-pantothenate biosynthesis; (R)-pantothenate from (R)-pantoate and beta-alanine: step 1/1. In terms of biological role, catalyzes the condensation of pantoate with beta-alanine in an ATP-dependent reaction via a pantoyl-adenylate intermediate. This is Pantothenate synthetase from Marinomonas sp. (strain MWYL1).